Consider the following 72-residue polypeptide: Translation initiation factor IF-1 (72 aa).

The 72-residue stretch at 1-72 folds into the S1-like domain; the sequence is MSKDDVIEVE…TRGRIIYRHK (72 aa).

Belongs to the IF-1 family. Component of the 30S ribosomal translation pre-initiation complex which assembles on the 30S ribosome in the order IF-2 and IF-3, IF-1 and N-formylmethionyl-tRNA(fMet); mRNA recruitment can occur at any time during PIC assembly.

Its subcellular location is the cytoplasm. In terms of biological role, one of the essential components for the initiation of protein synthesis. Stabilizes the binding of IF-2 and IF-3 on the 30S subunit to which N-formylmethionyl-tRNA(fMet) subsequently binds. Helps modulate mRNA selection, yielding the 30S pre-initiation complex (PIC). Upon addition of the 50S ribosomal subunit IF-1, IF-2 and IF-3 are released leaving the mature 70S translation initiation complex. In Carboxydothermus hydrogenoformans (strain ATCC BAA-161 / DSM 6008 / Z-2901), this protein is Translation initiation factor IF-1.